Reading from the N-terminus, the 176-residue chain is Large ribosomal subunit protein uL6 (176 aa).

Belongs to the universal ribosomal protein uL6 family. Part of the 50S ribosomal subunit.

Its function is as follows. This protein binds to the 23S rRNA, and is important in its secondary structure. It is located near the subunit interface in the base of the L7/L12 stalk, and near the tRNA binding site of the peptidyltransferase center. This is Large ribosomal subunit protein uL6 from Lactobacillus gasseri (strain ATCC 33323 / DSM 20243 / BCRC 14619 / CIP 102991 / JCM 1131 / KCTC 3163 / NCIMB 11718 / NCTC 13722 / AM63).